Consider the following 236-residue polypeptide: uncharacterized protein (236 aa).

Residues 3-116 (TCLIVDDELF…RLSKTLKRVR (114 aa)) enclose the Response regulatory domain. Position 54 is a 4-aspartylphosphate (Asp54). The region spanning 135-235 (LPCYSGSKLK…LKSLKQLFGF (101 aa)) is the HTH LytTR-type domain.

This is an uncharacterized protein from Shewanella oneidensis (strain ATCC 700550 / JCM 31522 / CIP 106686 / LMG 19005 / NCIMB 14063 / MR-1).